Here is an 893-residue protein sequence, read N- to C-terminus: MFGNLLTKMFGSRNDRLLKQMSKEVTKINALEPVLEALSDEELKAKTTEFKERFTQGETVEQLLVEAFAVVREASKRVFGMRHFDVQMIGGMVLNEGKIAEMRTGEGKTLTATLPSYLNALTDKGVHVITVNDYLATRDADWSRPLFEFLGLTVGCNVAGMTTQDKQAAYQSDITYGTNNEFGFDYLRDNMVFSPQERSQKPLHFAIIDEVDSILIDEARTPLIISGQAEDSSALYKIINTLVPTLEQQEEEDKEGEESTGDFTIDEKAKQVYLTERGQIHIEEIMVEKELLTAGDTLFSAANITLLHHVMAALRAHKLFQKDVDYIVKDDEIVIVDEHTGRTMEGRRWSEGLHQAVEAKEGVNIQNENQTLASITFQNYFRIYEKLSGMTGTADTEAFEFNHIYGLETVIIPTNQPMVRKDLSDLIYLTTEEKFEAILADIQDCVKRGQPVLVGTIAIETSEFLSDFLKKAKIKHKVLNAKFHQQEAEIVADAGKENAVTIATNMAGRGTDIVLGGNLDATIAKLTNPSEDDIAKAKAQWKIDHERVLELGGLHIVATERHESRRIDNQLRGRSGRQGDEGSTRFYLSMEDSLMRIFASERISNMMRKLGMEKGEAIEHPWVTRSIENAQRKVEGRNFDMRKQLLEYDDVANDQRGVIYEQRNELLDNEEIGSVVEAIRSDVINGVIDQHIPRQSLDEMWDIEGLEEQLKGEYATELTIAKWLEDDSKLHEESLREKIITEFEQAYKDKEEAVGVDVLRQFEKAVMLQSLDSHWKEHLSAMDHLRQGIGLRAHAQKNPKQEFKRESFELFTEMLDNLKYDVVGILSKVQIRAESDVEAVEEQHRKSEEVPMDFQHQSASSPSEQAQTPRVGRNEPCPCGSGKKYKQCHGKLA.

Residues glutamine 87, 105–109 (GEGKT), and aspartate 512 each bind ATP. Positions 840–849 (VEEQHRKSEE) are enriched in basic and acidic residues. The tract at residues 840–893 (VEEQHRKSEEVPMDFQHQSASSPSEQAQTPRVGRNEPCPCGSGKKYKQCHGKLA) is disordered. A compositionally biased stretch (polar residues) spans 855-868 (QHQSASSPSEQAQT). 4 residues coordinate Zn(2+): cysteine 877, cysteine 879, cysteine 888, and histidine 889. A compositionally biased stretch (basic residues) spans 883-893 (KKYKQCHGKLA).

The protein belongs to the SecA family. Monomer and homodimer. Part of the essential Sec protein translocation apparatus which comprises SecA, SecYEG and auxiliary proteins SecDF-YajC and YidC. Zn(2+) is required as a cofactor.

The protein localises to the cell inner membrane. It is found in the cytoplasm. It carries out the reaction ATP + H2O + cellular proteinSide 1 = ADP + phosphate + cellular proteinSide 2.. Its function is as follows. Part of the Sec protein translocase complex. Interacts with the SecYEG preprotein conducting channel. Has a central role in coupling the hydrolysis of ATP to the transfer of proteins into and across the cell membrane, serving both as a receptor for the preprotein-SecB complex and as an ATP-driven molecular motor driving the stepwise translocation of polypeptide chains across the membrane. The sequence is that of Protein translocase subunit SecA from Colwellia psychrerythraea (strain 34H / ATCC BAA-681) (Vibrio psychroerythus).